A 29-amino-acid polypeptide reads, in one-letter code: MDTLTQKLTVLIAVLELLVALLRLIDLLK.

A helical membrane pass occupies residues 10 to 27 (VLIAVLELLVALLRLIDL).

The protein resides in the cell inner membrane. Its function is as follows. Toxic component of a type I toxin-antitoxin (TA) system. Expression in the absence of its cognate antitoxin (small sRNA orzO) leads to cell stasis and a decrease in colony-forming units. Repression of ZorO toxicity requires base pairing between zorO mRNA and sRNA OrzO, as well as RNase III (rnc), suggesting the mRNA is degraded. Base pairing occurs between 18 bases in the 5' UTR of zorO mRNA and the 5' end of OrzO sRNA. sRNA OrzP, which differs only in 4 of these 18 bases, does not repress ZorO toxicity. Integration of the protein into the inner membrane damages membrane integrity and affects membrane potential. It leads to increased levels of hydroxyl radicals. The sequence is that of Small toxic protein ZorO from Escherichia coli O157:H7.